The chain runs to 276 residues: Large ribosomal subunit protein uL2 (276 aa).

Disordered stretches follow at residues 1–61 (MALK…HKQK) and 224–276 (AMNP…KKKN). A compositionally biased stretch (basic and acidic residues) spans 15 to 31 (GRIDLRKDEITAQKPEK).

Belongs to the universal ribosomal protein uL2 family. As to quaternary structure, part of the 50S ribosomal subunit. Forms a bridge to the 30S subunit in the 70S ribosome.

Functionally, one of the primary rRNA binding proteins. Required for association of the 30S and 50S subunits to form the 70S ribosome, for tRNA binding and peptide bond formation. It has been suggested to have peptidyltransferase activity; this is somewhat controversial. Makes several contacts with the 16S rRNA in the 70S ribosome. The chain is Large ribosomal subunit protein uL2 from Treponema denticola (strain ATCC 35405 / DSM 14222 / CIP 103919 / JCM 8153 / KCTC 15104).